Reading from the N-terminus, the 606-residue chain is Leucine-rich repeat and immunoglobulin-like domain-containing nogo receptor-interacting protein 2 (606 aa).

A signal peptide spans 1 to 27 (MLHTAIPCWQPFLGLAVVLLLMGSTIG). The 30-residue stretch at 28-57 (CPARCECSAQNKSVSCHRRRLLAIPEGIPI) folds into the LRRNT domain. Residues 28–545 (CPARCECSAQ…LDLKTILVST (518 aa)) are Extracellular-facing. Residue asparagine 38 is glycosylated (N-linked (GlcNAc...) asparagine). 12 LRR repeats span residues 58–79 (ETKILDLSKNRLKSINPEEFIS), 82–103 (LLEEIDLSDNIIANVEPGAFNN), 106–127 (NLRSLRLKGNRLKLVPLGVFTG), 130–151 (NLTKLDISENKIVILLDYMFQD), 154–175 (NLKSLEVGDNDLVYISHRAFSG), 178–199 (SLEQLTLEKCNLTAVPTEALSH), 202–223 (SLIALHLKHLNINNMPVYAFKR), 226–247 (HLKNLEIDYWPLLDLMPANSLY), 250–271 (NLTSLSITNTNLSTVPFLAFKH), 274–295 (YLTHLNLSYNPISTIEAGMFSD), 298–319 (RLQELHIVGAQLRTIEPHSFQG), and 322–343 (FLRVLNVSQNLLETLEENVFSS). An N-linked (GlcNAc...) asparagine glycan is attached at asparagine 130. An N-linked (GlcNAc...) asparagine glycan is attached at asparagine 188. Residues asparagine 250, asparagine 260, and asparagine 279 are each glycosylated (N-linked (GlcNAc...) asparagine). Asparagine 327 carries an N-linked (GlcNAc...) asparagine glycan. The region spanning 355 to 409 (NPLACDCRLLWLLQRQPNLQFGGQQPMCAGPDTIRERSFKDFHSTALSFYFTCKK) is the LRRCT domain. Cysteine 432 and cysteine 483 are disulfide-bonded. 3 N-linked (GlcNAc...) asparagine glycosylation sites follow: asparagine 491, asparagine 522, and asparagine 527. A helical membrane pass occupies residues 546–566 (AMGCFTFLGVVLFCFLLLFVW). Residues 567–606 (SRGKGKHKNSIDLEYVPRKNNGAVVEGEVAGPRRFNMKMI) lie on the Cytoplasmic side of the membrane.

It localises to the membrane. This chain is Leucine-rich repeat and immunoglobulin-like domain-containing nogo receptor-interacting protein 2 (Lingo2), found in Mus musculus (Mouse).